The chain runs to 89 residues: Small ribosomal subunit protein uS17 (89 aa).

The protein belongs to the universal ribosomal protein uS17 family. In terms of assembly, part of the 30S ribosomal subunit.

Its function is as follows. One of the primary rRNA binding proteins, it binds specifically to the 5'-end of 16S ribosomal RNA. The chain is Small ribosomal subunit protein uS17 from Chlorobium phaeobacteroides (strain BS1).